Reading from the N-terminus, the 185-residue chain is Large ribosomal subunit protein bL25 (185 aa).

It belongs to the bacterial ribosomal protein bL25 family. CTC subfamily. Part of the 50S ribosomal subunit; part of the 5S rRNA/L5/L18/L25 subcomplex. Contacts the 5S rRNA. Binds to the 5S rRNA independently of L5 and L18.

Its function is as follows. This is one of the proteins that binds to the 5S RNA in the ribosome where it forms part of the central protuberance. This is Large ribosomal subunit protein bL25 from Chlamydia trachomatis serovar L2 (strain ATCC VR-902B / DSM 19102 / 434/Bu).